The following is a 399-amino-acid chain: Tryptophan synthase beta chain (399 aa).

Lys92 bears the N6-(pyridoxal phosphate)lysine mark.

The protein belongs to the TrpB family. As to quaternary structure, tetramer of two alpha and two beta chains. Requires pyridoxal 5'-phosphate as cofactor.

The enzyme catalyses (1S,2R)-1-C-(indol-3-yl)glycerol 3-phosphate + L-serine = D-glyceraldehyde 3-phosphate + L-tryptophan + H2O. It functions in the pathway amino-acid biosynthesis; L-tryptophan biosynthesis; L-tryptophan from chorismate: step 5/5. In terms of biological role, the beta subunit is responsible for the synthesis of L-tryptophan from indole and L-serine. The protein is Tryptophan synthase beta chain of Bordetella pertussis (strain Tohama I / ATCC BAA-589 / NCTC 13251).